Reading from the N-terminus, the 832-residue chain is Translation initiation factor IF-2 (832 aa).

Residues 1–10 show a composition bias toward basic and acidic residues; the sequence is MLMSDVEKFG. Disordered regions lie at residues 1–87, 120–148, and 163–201; these read MLMS…SRSA, RDEE…PAAA, and IAPG…GGGG. The span at 11-20 shows a compositional bias: gly residues; the sequence is GDCGSSGGSG. Composition is skewed to polar residues over residues 29–42 and 71–87; these read RAST…STGG and SPYT…SRSA. The region spanning 331–500 is the tr-type G domain; sequence PRPPVVTVMG…LLLAEMLELR (170 aa). Residues 340-347 are G1; the sequence is GHVDHGKT. GTP is bound at residue 340–347; it reads GHVDHGKT. Residues 365–369 are G2; it reads GITQH. The tract at residues 386 to 389 is G3; it reads DTPG. Residues 386-390 and 440-443 contribute to the GTP site; these read DTPGH and NKID. The segment at 440 to 443 is G4; that stretch reads NKID. The G5 stretch occupies residues 476–478; the sequence is SAK.

Belongs to the TRAFAC class translation factor GTPase superfamily. Classic translation factor GTPase family. IF-2 subfamily.

It is found in the cytoplasm. Its function is as follows. One of the essential components for the initiation of protein synthesis. Protects formylmethionyl-tRNA from spontaneous hydrolysis and promotes its binding to the 30S ribosomal subunits. Also involved in the hydrolysis of GTP during the formation of the 70S ribosomal complex. This Anaplasma marginale (strain St. Maries) protein is Translation initiation factor IF-2.